Here is a 542-residue protein sequence, read N- to C-terminus: Exopolysaccharide phosphotransferase CpsY (542 aa).

The segment at 522–542 (SPTVSAPLEDGQTANPAQTAR) is disordered. The span at 533-542 (QTANPAQTAR) shows a compositional bias: polar residues.

The protein belongs to the stealth family.

This chain is Exopolysaccharide phosphotransferase CpsY (cpsY), found in Mycobacterium leprae (strain TN).